The following is a 382-amino-acid chain: Dihydroflavonol 4-reductase (382 aa).

NADP(+)-binding residues include K44 and Y163.

Belongs to the NAD(P)-dependent epimerase/dehydratase family. Dihydroflavonol-4-reductase subfamily.

It catalyses the reaction a (2R,3S,4S)-leucoanthocyanidin + NADP(+) = a (2R,3R)-dihydroflavonol + NADPH + H(+). The catalysed reaction is (2S)-flavan-4-ol + NADP(+) = (2S)-flavanone + NADPH + H(+). Its pathway is pigment biosynthesis; anthocyanin biosynthesis. Bifunctional enzyme involved in flavonoid metabolism. This Arabidopsis thaliana (Mouse-ear cress) protein is Dihydroflavonol 4-reductase (DFRA).